The chain runs to 147 residues: Lysozyme C (147 aa).

Residues 1-18 (MKFFLILGFCLLPLIAQG) form the signal peptide. A C-type lysozyme domain is found at 19–147 (KVFQRCELAA…VSQWIRGCRV (129 aa)). Disulfide bonds link cysteine 24–cysteine 145, cysteine 48–cysteine 133, cysteine 82–cysteine 98, and cysteine 94–cysteine 112. Active-site residues include glutamate 53 and aspartate 70. Aspartate 119 is a substrate binding site.

It belongs to the glycosyl hydrolase 22 family. In terms of assembly, monomer. As to expression, expressed in liver and ovary. Not expressed in bone marrow, lung, spleen, intestine or oviduct.

It is found in the secreted. The catalysed reaction is Hydrolysis of (1-&gt;4)-beta-linkages between N-acetylmuramic acid and N-acetyl-D-glucosamine residues in a peptidoglycan and between N-acetyl-D-glucosamine residues in chitodextrins.. Functionally, lysozymes have primarily a bacteriolytic function; those in tissues and body fluids are associated with the monocyte-macrophage system and enhance the activity of immunoagents. Has bacteriolytic activity against M.luteus. This is Lysozyme C from Dromaius novaehollandiae (Emu).